The sequence spans 502 residues: Polyadenylate-binding protein, cytoplasmic and nuclear (502 aa).

RRM domains follow at residues 14-90 (LTIY…KKDE), 96-176 (GNIF…LYNP), 191-275 (TNCF…KGQR), and 299-376 (KNLY…YFKN).

Belongs to the polyadenylate-binding protein type-1 family.

The protein resides in the cytoplasm. It localises to the nucleus. Its function is as follows. Binds the poly(A) tail of mRNA. Appears to be an important mediator of the multiple roles of the poly(A) tail in mRNA biogenesis, stability and translation. The protein is Polyadenylate-binding protein, cytoplasmic and nuclear (PAB1) of Encephalitozoon cuniculi (strain GB-M1) (Microsporidian parasite).